A 397-amino-acid polypeptide reads, in one-letter code: Elongation factor Tu (397 aa).

Residues lysine 10 to valine 207 form the tr-type G domain. Residues glycine 19–threonine 26 are G1. Glycine 19–threonine 26 is a GTP binding site. Threonine 26 provides a ligand contact to Mg(2+). Positions glycine 63–asparagine 67 are G2. Residues aspartate 84–glycine 87 form a G3 region. Residues aspartate 84–histidine 88 and asparagine 139–aspartate 142 contribute to the GTP site. A G4 region spans residues asparagine 139–aspartate 142. A G5 region spans residues serine 177–leucine 179.

This sequence belongs to the TRAFAC class translation factor GTPase superfamily. Classic translation factor GTPase family. EF-Tu/EF-1A subfamily. In terms of assembly, monomer.

It is found in the cytoplasm. The catalysed reaction is GTP + H2O = GDP + phosphate + H(+). Functionally, GTP hydrolase that promotes the GTP-dependent binding of aminoacyl-tRNA to the A-site of ribosomes during protein biosynthesis. The polypeptide is Elongation factor Tu (Tropheryma whipplei (strain TW08/27) (Whipple's bacillus)).